The following is a 333-amino-acid chain: Adenosine deaminase (333 aa).

Zn(2+)-binding residues include His-12 and His-14. Substrate contacts are provided by His-14, Asp-16, and Gly-170. Residue His-197 coordinates Zn(2+). The Proton donor role is filled by Glu-200. Position 278 (Asp-278) interacts with Zn(2+). Asp-279 lines the substrate pocket.

The protein belongs to the metallo-dependent hydrolases superfamily. Adenosine and AMP deaminases family. Adenosine deaminase subfamily. The cofactor is Zn(2+).

The enzyme catalyses adenosine + H2O + H(+) = inosine + NH4(+). It carries out the reaction 2'-deoxyadenosine + H2O + H(+) = 2'-deoxyinosine + NH4(+). In terms of biological role, catalyzes the hydrolytic deamination of adenosine and 2-deoxyadenosine. This is Adenosine deaminase from Escherichia coli O81 (strain ED1a).